The following is a 355-amino-acid chain: Peptide chain release factor 1 (355 aa).

Q233 carries the post-translational modification N5-methylglutamine.

This sequence belongs to the prokaryotic/mitochondrial release factor family. In terms of processing, methylated by PrmC. Methylation increases the termination efficiency of RF1.

The protein resides in the cytoplasm. Functionally, peptide chain release factor 1 directs the termination of translation in response to the peptide chain termination codons UAG and UAA. The sequence is that of Peptide chain release factor 1 from Desulforudis audaxviator (strain MP104C).